We begin with the raw amino-acid sequence, 223 residues long: 2-C-methyl-D-erythritol 4-phosphate cytidylyltransferase (223 aa).

It belongs to the IspD/TarI cytidylyltransferase family. IspD subfamily.

The catalysed reaction is 2-C-methyl-D-erythritol 4-phosphate + CTP + H(+) = 4-CDP-2-C-methyl-D-erythritol + diphosphate. It participates in isoprenoid biosynthesis; isopentenyl diphosphate biosynthesis via DXP pathway; isopentenyl diphosphate from 1-deoxy-D-xylulose 5-phosphate: step 2/6. Catalyzes the formation of 4-diphosphocytidyl-2-C-methyl-D-erythritol from CTP and 2-C-methyl-D-erythritol 4-phosphate (MEP). The chain is 2-C-methyl-D-erythritol 4-phosphate cytidylyltransferase from Synechococcus sp. (strain WH7803).